The sequence spans 199 residues: Recombination protein RecR (199 aa).

The segment at 57 to 72 (CRQCRVLTEEPVCGLC) adopts a C4-type zinc-finger fold. The Toprim domain occupies 80 to 175 (SLLCVVEGPA…RTTRIAHGVP (96 aa)).

This sequence belongs to the RecR family.

Functionally, may play a role in DNA repair. It seems to be involved in an RecBC-independent recombinational process of DNA repair. It may act with RecF and RecO. In Alkalilimnicola ehrlichii (strain ATCC BAA-1101 / DSM 17681 / MLHE-1), this protein is Recombination protein RecR.